A 304-amino-acid chain; its full sequence is Acetylglutamate kinase (304 aa).

Substrate-binding positions include 77-78 (GG), Arg-99, and Asn-201.

This sequence belongs to the acetylglutamate kinase family. ArgB subfamily.

Its subcellular location is the cytoplasm. The enzyme catalyses N-acetyl-L-glutamate + ATP = N-acetyl-L-glutamyl 5-phosphate + ADP. Its pathway is amino-acid biosynthesis; L-arginine biosynthesis; N(2)-acetyl-L-ornithine from L-glutamate: step 2/4. Catalyzes the ATP-dependent phosphorylation of N-acetyl-L-glutamate. The chain is Acetylglutamate kinase from Methylibium petroleiphilum (strain ATCC BAA-1232 / LMG 22953 / PM1).